The sequence spans 185 residues: Ribosome-recycling factor (185 aa).

It belongs to the RRF family.

It is found in the cytoplasm. Responsible for the release of ribosomes from messenger RNA at the termination of protein biosynthesis. May increase the efficiency of translation by recycling ribosomes from one round of translation to another. In Legionella pneumophila (strain Corby), this protein is Ribosome-recycling factor.